Here is a 312-residue protein sequence, read N- to C-terminus: GDSL esterase/lipase At2g38180 (312 aa).

The N-terminal stretch at 1–22 (MVGPVRPQIVLFGSSIVQYSFT) is a signal peptide. A glycan (N-linked (GlcNAc...) asparagine) is linked at asparagine 79. Residues 285–312 (EPPHPVSLCDHELTQNEQLEPPQPTARL) form a disordered region.

Belongs to the 'GDSL' lipolytic enzyme family.

It is found in the secreted. This is GDSL esterase/lipase At2g38180 from Arabidopsis thaliana (Mouse-ear cress).